Reading from the N-terminus, the 224-residue chain is Pyridoxal 5'-phosphate synthase subunit SNO1 (224 aa).

67–69 (GES) contributes to the L-glutamine binding site. Cysteine 100 serves as the catalytic Nucleophile. L-glutamine is bound by residues arginine 129 and 160 to 161 (IR). Active-site charge relay system residues include histidine 203 and glutamate 205.

This sequence belongs to the glutaminase PdxT/SNO family.

It carries out the reaction aldehydo-D-ribose 5-phosphate + D-glyceraldehyde 3-phosphate + L-glutamine = pyridoxal 5'-phosphate + L-glutamate + phosphate + 3 H2O + H(+). The catalysed reaction is L-glutamine + H2O = L-glutamate + NH4(+). Its pathway is cofactor biosynthesis; pyridoxal 5'-phosphate biosynthesis. Functionally, catalyzes the hydrolysis of glutamine to glutamate and ammonia as part of the biosynthesis of pyridoxal 5'-phosphate. The resulting ammonia molecule is channeled to the active site of a SNZ isoform. This chain is Pyridoxal 5'-phosphate synthase subunit SNO1 (SNO1), found in Saccharomyces cerevisiae (strain ATCC 204508 / S288c) (Baker's yeast).